The sequence spans 261 residues: Cytochrome c oxidase subunit 3 (261 aa).

The Mitochondrial matrix segment spans residues Met1–Pro15. The helical transmembrane segment at Trp16 to Trp34 threads the bilayer. The Mitochondrial intermembrane segment spans residues Phe35–Ser40. Residues Gln41–Thr66 traverse the membrane as a helical segment. The Mitochondrial matrix segment spans residues Phe67–Thr72. Residues Pro73 to Ser105 form a helical membrane-spanning segment. Topologically, residues Leu106–Glu128 are mitochondrial intermembrane. A helical transmembrane segment spans residues Val129–Met152. Residues Glu153 to Asn155 are Mitochondrial matrix-facing. The helical transmembrane segment at Arg156–Glu183 threads the bilayer. Topologically, residues Ala184–Asp190 are mitochondrial intermembrane. The helical transmembrane segment at Ser191–Leu223 threads the bilayer. Over Lys224–His232 the chain is Mitochondrial matrix. The helical transmembrane segment at Phe233 to Ile256 threads the bilayer. Residues Tyr257–Ser261 lie on the Mitochondrial intermembrane side of the membrane.

The protein belongs to the cytochrome c oxidase subunit 3 family. Component of the cytochrome c oxidase (complex IV, CIV), a multisubunit enzyme composed of 14 subunits. The complex is composed of a catalytic core of 3 subunits MT-CO1, MT-CO2 and MT-CO3, encoded in the mitochondrial DNA, and 11 supernumerary subunits COX4I, COX5A, COX5B, COX6A, COX6B, COX6C, COX7A, COX7B, COX7C, COX8 and NDUFA4, which are encoded in the nuclear genome. The complex exists as a monomer or a dimer and forms supercomplexes (SCs) in the inner mitochondrial membrane with NADH-ubiquinone oxidoreductase (complex I, CI) and ubiquinol-cytochrome c oxidoreductase (cytochrome b-c1 complex, complex III, CIII), resulting in different assemblies (supercomplex SCI(1)III(2)IV(1) and megacomplex MCI(2)III(2)IV(2)).

Its subcellular location is the mitochondrion inner membrane. It catalyses the reaction 4 Fe(II)-[cytochrome c] + O2 + 8 H(+)(in) = 4 Fe(III)-[cytochrome c] + 2 H2O + 4 H(+)(out). In terms of biological role, component of the cytochrome c oxidase, the last enzyme in the mitochondrial electron transport chain which drives oxidative phosphorylation. The respiratory chain contains 3 multisubunit complexes succinate dehydrogenase (complex II, CII), ubiquinol-cytochrome c oxidoreductase (cytochrome b-c1 complex, complex III, CIII) and cytochrome c oxidase (complex IV, CIV), that cooperate to transfer electrons derived from NADH and succinate to molecular oxygen, creating an electrochemical gradient over the inner membrane that drives transmembrane transport and the ATP synthase. Cytochrome c oxidase is the component of the respiratory chain that catalyzes the reduction of oxygen to water. Electrons originating from reduced cytochrome c in the intermembrane space (IMS) are transferred via the dinuclear copper A center (CU(A)) of subunit 2 and heme A of subunit 1 to the active site in subunit 1, a binuclear center (BNC) formed by heme A3 and copper B (CU(B)). The BNC reduces molecular oxygen to 2 water molecules using 4 electrons from cytochrome c in the IMS and 4 protons from the mitochondrial matrix. The polypeptide is Cytochrome c oxidase subunit 3 (MT-CO3) (Pelomedusa subrufa (African side-necked turtle)).